The chain runs to 1246 residues: MPHPVQLGKKVRMSYSQINEVLDMPNLIELQKEAYDWFLDEGLREVFNDISPIQDYTGNLILEFVDYSLDENPKYDVGESKERDATYAAPLKVKVRLINKETGEVKEQEVFMGDFPLMTDTGTFIINGAERVIVSQLVRSPGVYYNRQFDKTGKQLYSATVIPNRGAWLEYETDSNDVVSVRVDRTRKQPATVLLRALGYGTDQQIKDLLGEDERILATLEKDNTKTAEEGLLEIYKKLRPGEPPTIESATSLINTLFFDAKRYDLAKVGRYKFSKKLSLANRIMSHKAAENVSDPQTGEILVEEGTKIDREISLLIQNSGINEVHVYSEENKKIKVIGNHFVDIKTHIDFDIQDLKLRERVYYPVLREILDTFDSEAEIKEALKERKRELIPKHILKSDIVASINYAFNLAHEIGNVDDIDHLGNRRLRSVGELLQNQFRIGLSRMERVVKERMTIQDVDLVTPQALINIRPVAASIKEFFGSSQLSQFMDQTNPLAELTHKRRLSALGPGGLSRERAGFEVRDVHHSHYGRMCPIETPEGPNIGLINSLSSYARINEYGFIESPYRKVDKKRDVVTTDIEYLTADEEDLFIIAQANEPLDEEGKFGNKRVTSRTKFGGIDVVPFDEVDYMDVSPKQVVSVATAMIPFLENDDANRALMGSNMQRQAVPLLITDAPIIGTGMEYKAAKDSGVVVVARNSGIVDYVASNEIVVKLEDGQKDRYKLLKFKRSNQGTCINQKPIVSKGERIEAGDVIADGPSTDRGEIALGRNCLVGFMAWEGYNFEDAILINEKLVKEDALTTIHIEEYESEARDTKLGPEEITRDIPNVGEDSLKDLDERGVIRIGAEVESGDILVGKVTPKGETELTAEERLLRAIFGEKAREVRDTSLKVPHGENGIIVDIKVFTRENGDELPPGVNELVRVYIAKKKKINVGDKMAGRHGNKGVISRILPQEDMPFLEDGTPLEIVLNPLGVPSRMNIGQILEVHLGLAAKALGWKVATPVFDGANEFDIMDALEESGYPRGGKLKLQDGRTGEAFDNPVTVGYMYMLKLHHLVDDKIHARSTGPYSLVTQQPLGGKAQFGGQRFGEMEVWALEAYGAAHTLQEILTVKSDDVVGRVKTYECIVKGENIPEPGVPESFKVLIKELQSLCLDVKVLTDDDHELEIKETIDDDAGEMSLEHGDFDYGLEEPTVPEGSHITDEEEKDEDNDSEEALITEEDFEPTSVETEYAEDDDEFDGYNDFKA.

Residues 1171–1246 (IDDDAGEMSL…EFDGYNDFKA (76 aa)) form a disordered region. 2 stretches are compositionally biased toward acidic residues: residues 1202 to 1223 (DEEE…EDFE) and 1230 to 1240 (EYAEDDDEFDG).

It belongs to the RNA polymerase beta chain family. In terms of assembly, the RNAP catalytic core consists of 2 alpha, 1 beta, 1 beta' and 1 omega subunit. When a sigma factor is associated with the core the holoenzyme is formed, which can initiate transcription.

The enzyme catalyses RNA(n) + a ribonucleoside 5'-triphosphate = RNA(n+1) + diphosphate. DNA-dependent RNA polymerase catalyzes the transcription of DNA into RNA using the four ribonucleoside triphosphates as substrates. This is DNA-directed RNA polymerase subunit beta from Alkaliphilus metalliredigens (strain QYMF).